We begin with the raw amino-acid sequence, 538 residues long: Probable inorganic phosphate transporter 1-4 (538 aa).

Residues 1–23 (MAGELKVLNALDSAKTQWYHFTA) are Cytoplasmic-facing. Residues 24 to 44 (IVIAGMGFFTDAYDLFSISLV) traverse the membrane as a helical segment. Residues 45–69 (TKLLGRIYYFNPASKSPGSLPPNVS) lie on the Extracellular side of the membrane. The helical transmembrane segment at 70–90 (AAVNGVAFCGTLAGQLFFGWL) threads the bilayer. The Cytoplasmic portion of the chain corresponds to 91–98 (GDKMGRKK). The chain crosses the membrane as a helical span at residues 99–119 (VYGMTLMLMVICCLASGLSFG). Topologically, residues 120-123 (SSAK) are extracellular. The chain crosses the membrane as a helical span at residues 124-144 (GVMATLCFFRFWLGFGIGGDY). The Cytoplasmic segment spans residues 145-163 (PLSATIMSEYANKRTRGAF). A helical membrane pass occupies residues 164–184 (IAAVFAMQGFGNLTGGIVAII). Residues 185–210 (VSAAFKSRFDAPAYRDDRTGSTVPQA) lie on the Extracellular side of the membrane. Residues 211–231 (DYAWRIVLMFGAIPALLTYYW) form a helical membrane-spanning segment. At 232-294 (RMKMPETARY…RQFLRRHGRH (63 aa)) the chain is on the cytoplasmic side. The chain crosses the membrane as a helical span at residues 295 to 315 (LLGTTVCWFVLDIAFYSSNLF). Over 316-346 (QKDIYTAVQWLPKADTMSALEEMFKISRAQT) the chain is Extracellular. A helical transmembrane segment spans residues 347 to 367 (LVALCGTIPGYWFTVFFIDII). The Cytoplasmic portion of the chain corresponds to 368 to 369 (GR). Residues 370 to 390 (FVIQLGGFFFMTAFMLGLAVP) form a helical membrane-spanning segment. Residues 391–396 (YHHWTT) lie on the Extracellular side of the membrane. Residues 397–417 (PGNHIGFVVMYAFTFFFANFG) form a helical membrane-spanning segment. Topologically, residues 418 to 440 (PNSTTFIVPAEIFPARLRSTCHG) are cytoplasmic. The chain crosses the membrane as a helical span at residues 441-461 (ISAAAGKAGAIVGSFGFLYAA). Over 462–481 (QSTDASKTDAGYPPGIGVRN) the chain is Extracellular. Residues 482-502 (SLFFLAGCNVIGFFFTFLVPE) traverse the membrane as a helical segment. Over 503–538 (SKGKSLEELSGENEDDDDVPEAPATADHRTAPAPPA) the chain is Cytoplasmic. The disordered stretch occupies residues 507–538 (SLEELSGENEDDDDVPEAPATADHRTAPAPPA). Residues 511–522 (LSGENEDDDDVP) are compositionally biased toward acidic residues.

It belongs to the major facilitator superfamily. Phosphate:H(+) symporter (TC 2.A.1.9) family. Expressed at low levels in roots.

The protein resides in the membrane. In terms of biological role, high-affinity transporter for external inorganic phosphate. The chain is Probable inorganic phosphate transporter 1-4 (PHT1-4) from Oryza sativa subsp. japonica (Rice).